Consider the following 341-residue polypeptide: MASDLKSKFLHVYQTLKSELLNDPAFEFHHDSRQWIDKMLDYNVPGGKLNRGLSVVDSYQLLKGAELTDDEIFLASALGWCIEWLQAYFLVLDDIMDGSHTRRGQPCWFRLPKVGMIAANDGLILRNHVPRILKKHFRGKPYYVDLVDLFNEVEFQTASGQMIDLITTLVGEKDLSKYSLSIHRRIVQYKTAYYSFYLPVACALLMFGEDLDNHVEVKNVLVEMGTYFQVQDDYLDCFGAPEVIGKIGTDIEDFSSWLVVKALELANEEQKKVLHENYGKKDPSSVAKVKELYNTLNLQGVFEDYESTSYKKLITSIEGHPSKAVQAVLKSFLGKIYKRQK.

Isopentenyl diphosphate contacts are provided by Lys-48, Arg-51, and Gln-86. Mg(2+) contacts are provided by Asp-93 and Asp-97. Arg-102 lines the dimethylallyl diphosphate pocket. Arg-103 contacts isopentenyl diphosphate. Positions 190, 191, 229, and 246 each coordinate dimethylallyl diphosphate.

Belongs to the FPP/GGPP synthase family. It depends on Mg(2+) as a cofactor.

Its subcellular location is the cytoplasm. The catalysed reaction is isopentenyl diphosphate + dimethylallyl diphosphate = (2E)-geranyl diphosphate + diphosphate. The enzyme catalyses isopentenyl diphosphate + (2E)-geranyl diphosphate = (2E,6E)-farnesyl diphosphate + diphosphate. The protein operates within isoprenoid biosynthesis; farnesyl diphosphate biosynthesis; farnesyl diphosphate from geranyl diphosphate and isopentenyl diphosphate: step 1/1. It participates in isoprenoid biosynthesis; geranyl diphosphate biosynthesis; geranyl diphosphate from dimethylallyl diphosphate and isopentenyl diphosphate: step 1/1. Catalyzes the sequential condensation of isopentenyl pyrophosphate with the allylic pyrophosphates, dimethylallyl pyrophosphate, and then with the resultant geranylpyrophosphate to the ultimate product farnesyl pyrophosphate. The polypeptide is Farnesyl pyrophosphate synthase (FPS1) (Helianthus annuus (Common sunflower)).